A 344-amino-acid polypeptide reads, in one-letter code: 3,4-dihydroxy-2-butanone 4-phosphate synthase (344 aa).

A DHBP synthase region spans residues 1 to 202 (MILKRVTEAL…VSDLISYRLE (202 aa)). D-ribulose 5-phosphate contacts are provided by residues 27 to 28 (RE), Asp-32, 139 to 143 (RTGHT), and Glu-163. Glu-28 contributes to the Mg(2+) binding site. His-142 provides a ligand contact to Mg(2+). The GTP cyclohydrolase II-like stretch occupies residues 203–344 (NESLLKMFCQ…GLKLVETISL (142 aa)).

The protein in the N-terminal section; belongs to the DHBP synthase family. It in the C-terminal section; belongs to the GTP cyclohydrolase II family. Mg(2+) serves as cofactor. Mn(2+) is required as a cofactor.

It carries out the reaction D-ribulose 5-phosphate = (2S)-2-hydroxy-3-oxobutyl phosphate + formate + H(+). The protein operates within cofactor biosynthesis; riboflavin biosynthesis; 2-hydroxy-3-oxobutyl phosphate from D-ribulose 5-phosphate: step 1/1. Catalyzes the conversion of D-ribulose 5-phosphate to formate and 3,4-dihydroxy-2-butanone 4-phosphate. The polypeptide is 3,4-dihydroxy-2-butanone 4-phosphate synthase (ribB) (Helicobacter pylori (strain ATCC 700392 / 26695) (Campylobacter pylori)).